The following is a 154-amino-acid chain: Movement protein (154 aa).

Disordered stretches follow at residues 83 to 103 (SSPT…HTRP) and 123 to 154 (WVAT…GRVR).

Belongs to the luteoviruses movement protein family.

Transports viral genome to neighboring plant cells directly through plasmosdesmata, without any budding. The movement protein allows efficient cell to cell propagation, by bypassing the host cell wall barrier. This Barley yellow dwarf virus (isolate MAV) (BYDV) protein is Movement protein.